Here is a 154-residue protein sequence, read N- to C-terminus: Large ribosomal subunit protein uL22c (154 aa).

It belongs to the universal ribosomal protein uL22 family. In terms of assembly, part of the 50S ribosomal subunit.

It is found in the plastid. The protein localises to the chloroplast. Functionally, this protein binds specifically to 23S rRNA. The globular domain of the protein is located near the polypeptide exit tunnel on the outside of the subunit, while an extended beta-hairpin is found that lines the wall of the exit tunnel in the center of the 70S ribosome. The protein is Large ribosomal subunit protein uL22c (rpl22) of Platanus occidentalis (Sycamore).